The primary structure comprises 96 residues: UPF0235 protein YpsIP31758_0827 (96 aa).

Belongs to the UPF0235 family.

This Yersinia pseudotuberculosis serotype O:1b (strain IP 31758) protein is UPF0235 protein YpsIP31758_0827.